The sequence spans 436 residues: MGQVLPLVTRQGDRIAIVSGLRTPFARQATAFHGIPAVDLGKMVVSELLARSEIPPAAIEQLVFGQVVQMPEAPNIAREIVLGTGMSVHTDAYSVSRACATSFQAVANVAESLMAGTIRAGIAGGADSSSVLPIGVSKKLARVLVDVNKARTLGQRLKLFSRLRLHDLLPVPPAVAEYSTGLRMGDTAEQMAKTYGITREQQDALAHRSHQRAAQAWSEGKLTNEVMTAYVPPYKAPLSEDNNIRGNSTLADYARLRPAFDRKHGTVTAANSTPLTDGAAAVIMMTESRAKELGLTPLGYLRSYAFTAIDVWQDMLLGPAWSTPLALDRAGLTLADLTLIDMHEAFAAQTLANVQLLGSERFARDVLGRAHATGEVDDSKFNVLGGSIAYGHPFAATGARMITQTLHELRRRGGGFGLVTACAAGGLGAAMVLEAE.

Cysteine 99 acts as the Acyl-thioester intermediate in catalysis. Residues histidine 392 and cysteine 422 each act as proton acceptor in the active site.

Belongs to the thiolase-like superfamily. Thiolase family. As to quaternary structure, heterotetramer of two alpha chains (FadJ) and two beta chains (FadI).

It is found in the cytoplasm. The catalysed reaction is an acyl-CoA + acetyl-CoA = a 3-oxoacyl-CoA + CoA. The protein operates within lipid metabolism; fatty acid beta-oxidation. Functionally, catalyzes the final step of fatty acid oxidation in which acetyl-CoA is released and the CoA ester of a fatty acid two carbons shorter is formed. The polypeptide is 3-ketoacyl-CoA thiolase (Escherichia fergusonii (strain ATCC 35469 / DSM 13698 / CCUG 18766 / IAM 14443 / JCM 21226 / LMG 7866 / NBRC 102419 / NCTC 12128 / CDC 0568-73)).